A 150-amino-acid chain; its full sequence is D-aminoacyl-tRNA deacylase (150 aa).

The short motif at 136-137 (GP) is the Gly-cisPro motif, important for rejection of L-amino acids element.

The protein belongs to the DTD family. As to quaternary structure, homodimer.

It localises to the cytoplasm. It carries out the reaction glycyl-tRNA(Ala) + H2O = tRNA(Ala) + glycine + H(+). It catalyses the reaction a D-aminoacyl-tRNA + H2O = a tRNA + a D-alpha-amino acid + H(+). In terms of biological role, an aminoacyl-tRNA editing enzyme that deacylates mischarged D-aminoacyl-tRNAs. Also deacylates mischarged glycyl-tRNA(Ala), protecting cells against glycine mischarging by AlaRS. Acts via tRNA-based rather than protein-based catalysis; rejects L-amino acids rather than detecting D-amino acids in the active site. By recycling D-aminoacyl-tRNA to D-amino acids and free tRNA molecules, this enzyme counteracts the toxicity associated with the formation of D-aminoacyl-tRNA entities in vivo and helps enforce protein L-homochirality. The protein is D-aminoacyl-tRNA deacylase of Staphylococcus aureus (strain MRSA252).